Consider the following 365-residue polypeptide: MLVPPEMIAVQSKLIYQMNKYCADRVQTRKAQIHKTIQEVCRVVQDVLKEVEVQEPRFISSLNDYNGRYDGLEVVSPTEFEIIIYLNQMGVLNFVDDGTLPGCAVLKLSDGRKRSMSLWVEFITASGYLSARKIRSRFQTLVAQACDKCSYRDSVKMIADTTEVKLRIRERIIVQITPAFKCAGLWPRSASHWPLPQIPWPHPNIVSEVKTEGFDMLSKECIALQGKNSAMEGDAWVLSFTEAENKLLQGGCRRRCLSILKTLRDRHLDLPGNPVTSYVMKTLLLYECEKHPREMEWDENCMGDRINGIFLQLISCLQCRRCPHYFLPNMDLFKGKSPGALENASKQVWRLTRIMLTNSRCLEEL.

This sequence belongs to the mab-21 family.

The chain is Protein mab-21 (mab-21) from Anopheles gambiae (African malaria mosquito).